Consider the following 371-residue polypeptide: Chaperone protein DnaJ (371 aa).

Residues 5 to 69 (DYYEILGIAK…QKRAAYDQHG (65 aa)) form the J domain. The CR-type zinc-finger motif lies at 127–205 (GASKEIHITT…CRGQGKVEEP (79 aa)). 8 residues coordinate Zn(2+): Cys-140, Cys-143, Cys-157, Cys-160, Cys-179, Cys-182, Cys-193, and Cys-196. CXXCXGXG motif repeat units follow at residues 140–147 (CEHCKGSG), 157–164 (CTTCRGVG), 179–186 (CPRCHGQG), and 193–200 (CRQCRGQG).

The protein belongs to the DnaJ family. In terms of assembly, homodimer. Zn(2+) serves as cofactor.

The protein localises to the cytoplasm. In terms of biological role, participates actively in the response to hyperosmotic and heat shock by preventing the aggregation of stress-denatured proteins and by disaggregating proteins, also in an autonomous, DnaK-independent fashion. Unfolded proteins bind initially to DnaJ; upon interaction with the DnaJ-bound protein, DnaK hydrolyzes its bound ATP, resulting in the formation of a stable complex. GrpE releases ADP from DnaK; ATP binding to DnaK triggers the release of the substrate protein, thus completing the reaction cycle. Several rounds of ATP-dependent interactions between DnaJ, DnaK and GrpE are required for fully efficient folding. Also involved, together with DnaK and GrpE, in the DNA replication of plasmids through activation of initiation proteins. This Hamiltonella defensa subsp. Acyrthosiphon pisum (strain 5AT) protein is Chaperone protein DnaJ.